We begin with the raw amino-acid sequence, 204 residues long: High mobility group-T protein (204 aa).

2 DNA-binding regions (HMG box) span residues 8–78 (PRGK…RSYI) and 94–162 (PKRP…TAYR). The segment at 162–204 (RNKGKVPVSMPAKAAAPAKDDDDDDDDDDDDEDDDDDDDEDDE) is disordered. Over residues 181 to 204 (DDDDDDDDDDDDEDDDDDDDEDDE) the composition is skewed to acidic residues.

It belongs to the HMGB family.

The protein resides in the nucleus. Its subcellular location is the chromosome. Functionally, binds preferentially single-stranded DNA and unwinds double-stranded DNA. The polypeptide is High mobility group-T protein (Oncorhynchus mykiss (Rainbow trout)).